The primary structure comprises 121 residues: Acid shock protein (121 aa).

The N-terminal stretch at 1–21 (MKKVLALMVAATLGLSSVAFA) is a signal peptide. The propeptide occupies 22 to 63 (ADTTATATPAATSTTATVAAQTKATQHQKHKVTKKTTEQKAQ). Residues 40–121 (AAQTKATQHQ…AKKPVAAPAA (82 aa)) form a disordered region. Over residues 74-83 (VQKAPVQKAQ) the composition is skewed to low complexity. Residues 84-93 (AAKKHVKKAS) show a composition bias toward basic residues. Positions 94–103 (VQKAPVQKAQ) are enriched in low complexity. Basic residues predominate over residues 104-113 (AAKKHHKTAK).

It belongs to the Asr family. Proteolytic processing gives rise to the active protein.

It localises to the periplasm. In terms of biological role, required for growth and/or survival at acidic conditions. This chain is Acid shock protein, found in Yersinia pseudotuberculosis serotype O:1b (strain IP 31758).